The following is a 196-amino-acid chain: Putative 3-methyladenine DNA glycosylase (196 aa).

It belongs to the DNA glycosylase MPG family.

The protein is Putative 3-methyladenine DNA glycosylase of Bacillus velezensis (strain DSM 23117 / BGSC 10A6 / LMG 26770 / FZB42) (Bacillus amyloliquefaciens subsp. plantarum).